Consider the following 465-residue polypeptide: VGFKAGVKDYKLTYYTPDYQTKDTDILAAFRVTPQPGVPPEEAGAAVAAESSTGTWTTVWTDGLTSLDRYKGRCYHIEPVAGEENQYICYVAYPLDLFEEGSVTNMFTSIVGNVFGFKALRALRLEDLRIPTAYIKTFQGPPHGIQVERDKLNKYGRPLLGCTIKPKLGLSAKNYGRAVYECLRGGLDFTKDDENVNSQPFMRWRDRFLFCAEGIYKAQAETGEIKGHYLNATAGTCEEMIKRAVFARELGAPIVMHDYLTGGFTANTSLAHYCWDNGLLLHIHRAMHAVIDRQKNHGMHFRVLAKALRMSGGDHIHAGTVVGKLEGEREITLGFVDLLRDDYIEKDRSRGIYFTQDWVSLPGVIPVASGGIHVWHMPALTEIFGDDSVLQFGGGTLGHPWGNAPGAVANRVALEACVQARNEGRNLAREGNEIIREASKWSPELAAACEVWKEIKFEFEAMDTL.

Lys4 bears the N6,N6,N6-trimethyllysine mark. Residues Asn113 and Thr163 each contribute to the substrate site. Lys165 serves as the catalytic Proton acceptor. A substrate-binding site is contributed by Lys167. Mg(2+)-binding residues include Lys191, Asp193, and Glu194. Lys191 bears the N6-carboxylysine mark. His284 acts as the Proton acceptor in catalysis. Substrate is bound by residues Arg285, His317, and Ser369.

It belongs to the RuBisCO large chain family. Type I subfamily. In terms of assembly, heterohexadecamer of 8 large chains and 8 small chains; disulfide-linked. The disulfide link is formed within the large subunit homodimers. The cofactor is Mg(2+). The disulfide bond which can form in the large chain dimeric partners within the hexadecamer appears to be associated with oxidative stress and protein turnover.

It is found in the plastid. The protein resides in the chloroplast. It carries out the reaction 2 (2R)-3-phosphoglycerate + 2 H(+) = D-ribulose 1,5-bisphosphate + CO2 + H2O. The catalysed reaction is D-ribulose 1,5-bisphosphate + O2 = 2-phosphoglycolate + (2R)-3-phosphoglycerate + 2 H(+). Its function is as follows. RuBisCO catalyzes two reactions: the carboxylation of D-ribulose 1,5-bisphosphate, the primary event in carbon dioxide fixation, as well as the oxidative fragmentation of the pentose substrate in the photorespiration process. Both reactions occur simultaneously and in competition at the same active site. This chain is Ribulose bisphosphate carboxylase large chain, found in Combretum indicum (Rangoon creeper).